Reading from the N-terminus, the 561-residue chain is Solute carrier family 41 member 2 (561 aa).

Residues 1–150 are Extracellular-facing; sequence MTANTGEPYK…KESSIAMALQ (150 aa). A helical transmembrane segment spans residues 151 to 171; it reads ILVPFLLAGFGTVSAGMVLDI. Over 172–183 the chain is Cytoplasmic; the sequence is VQHWDVFKNLTE. A helical transmembrane segment spans residues 184–204; the sequence is VFILVPALLGLKGNLEMTLAS. Over 205-233 the chain is Extracellular; sequence RLSTAVNVGKMDSPIEKWNLIIGNLALKQ. The helical transmembrane segment at 234-254 threads the bilayer; sequence VQATVVGFLAAVFAVILGWIP. At 255–270 the chain is on the cytoplasmic side; sequence DGKYQLDHAILLCSSS. The chain crosses the membrane as a helical span at residues 271-291; the sequence is VATAFIASLLQGIIMVGVIVG. The Extracellular portion of the chain corresponds to 292-301; the sequence is SKKTGINPDN. Residues 302–322 form a helical membrane-spanning segment; that stretch reads VATPIAASFGDLITLAILAWI. Over 323–333 the chain is Cytoplasmic; sequence SQGLYNCLGSY. The chain crosses the membrane as a helical span at residues 334 to 354; it reads AFVSPLVGVFFLAMTPIWIVI. The Extracellular portion of the chain corresponds to 355–364; sequence ASKHPATRTV. A helical membrane pass occupies residues 365-385; that stretch reads LHSGWEPVITAMLISSIGGLI. Residues 386 to 394 lie on the Cytoplasmic side of the membrane; the sequence is LDTTVSDPN. Residues 395–415 form a helical membrane-spanning segment; the sequence is LVGIVVYTPVINGIGGNLVAI. Over 416 to 457 the chain is Extracellular; sequence QASRISTYLHLYSIPGELPEDAKGCYHPCRTFCGTGVNNKSA. A helical transmembrane segment spans residues 458–478; it reads QVLLSLVIPGHLIFLYTIYLM. Residues 479-487 lie on the Cytoplasmic side of the membrane; it reads KSGHTSLTP. Residues 488–508 traverse the membrane as a helical segment; the sequence is IFVAVYLLAALLQVFALLWIA. The Extracellular segment spans residues 509–531; the sequence is DWMVHHIWRKGKDPDSFSIPYLT. A helical membrane pass occupies residues 532 to 552; it reads ALGDLLGTALLAISFHILWII. Residues 553–561 are Cytoplasmic-facing; sequence GDRDGDVGD.

The protein belongs to the SLC41A transporter family.

The protein localises to the cell membrane. The enzyme catalyses Mg(2+)(in) = Mg(2+)(out). It catalyses the reaction Mn(2+)(in) = Mn(2+)(out). It carries out the reaction Co(2+)(in) = Co(2+)(out). The catalysed reaction is Ni(2+)(in) = Ni(2+)(out). The enzyme catalyses Fe(2+)(in) = Fe(2+)(out). Functionally, acts as a plasma-membrane magnesium transporter. Can also mediate the transport of other divalent metal cations in an order of Ba(2+) &gt; Ni(2+) &gt; Co(2+) &gt; Fe(2+) &gt; Mn(2+). This Xenopus laevis (African clawed frog) protein is Solute carrier family 41 member 2 (slc41a2).